Reading from the N-terminus, the 352-residue chain is Keratocan (352 aa).

The signal sequence occupies residues 1-20 (MAGTICFIMWVLFITDTVWS). The LRRNT domain maps to 33–71 (DDWTIHDFECPMECFCPPSFPTALYCENRGLKEIPAIPS). Disulfide bonds link Cys42–Cys48 and Cys46–Cys58. 10 LRR repeats span residues 72-93 (RIWY…PFEN), 96-117 (QLRW…KGAL), 122-142 (KLLF…PLPR), 143-164 (SLEQ…TFSN), 167-180 (NLTL…KLVD), 193-213 (NLMQ…RLPA), 214-235 (NTMQ…YFNV), 238-258 (KVAF…PSRG), 263-282 (SILD…RISA), and 283-304 (HLQH…VICP). An N-linked (GlcNAc...) (keratan sulfate) asparagine glycan is attached at Asn93. An N-linked (GlcNAc...) (keratan sulfate) asparagine glycan is attached at Asn167. Residue Asn222 is glycosylated (N-linked (GlcNAc...) asparagine). Asn298 is a glycosylation site (N-linked (GlcNAc...) asparagine). Cysteines 303 and 343 form a disulfide.

This sequence belongs to the small leucine-rich proteoglycan (SLRP) family. SLRP class II subfamily. In terms of processing, binds keratan sulfate chains. As to expression, cornea (at protein level). Increased expression in the stroma of keratoconus corneas. Also detected in trachea, and in low levels, in intestine, skeletal muscle, ovary, lung and putamen.

It localises to the secreted. The protein resides in the extracellular space. The protein localises to the extracellular matrix. May be important in developing and maintaining corneal transparency and for the structure of the stromal matrix. The chain is Keratocan (KERA) from Homo sapiens (Human).